The primary structure comprises 386 residues: S-adenosylmethionine synthase (386 aa).

H16 is an ATP binding site. D18 provides a ligand contact to Mg(2+). E44 contributes to the K(+) binding site. L-methionine contacts are provided by E57 and Q100. Residues 100-110 (QSRDITQGVDR) are flexible loop. ATP contacts are provided by residues 165–167 (DAK), D240, 246–247 (RK), A263, and K267. Residue D240 participates in L-methionine binding. K271 is an L-methionine binding site.

Belongs to the AdoMet synthase family. In terms of assembly, homotetramer; dimer of dimers. It depends on Mg(2+) as a cofactor. K(+) is required as a cofactor.

It is found in the cytoplasm. It carries out the reaction L-methionine + ATP + H2O = S-adenosyl-L-methionine + phosphate + diphosphate. It participates in amino-acid biosynthesis; S-adenosyl-L-methionine biosynthesis; S-adenosyl-L-methionine from L-methionine: step 1/1. Its function is as follows. Catalyzes the formation of S-adenosylmethionine (AdoMet) from methionine and ATP. The overall synthetic reaction is composed of two sequential steps, AdoMet formation and the subsequent tripolyphosphate hydrolysis which occurs prior to release of AdoMet from the enzyme. The sequence is that of S-adenosylmethionine synthase from Francisella tularensis subsp. tularensis (strain FSC 198).